We begin with the raw amino-acid sequence, 389 residues long: uncharacterized protein (389 aa).

An N-terminal signal peptide occupies residues 1–23; it reads MHFAKLGAIGLLGSIICAYAASA.

Belongs to the IUNH family.

The protein resides in the endoplasmic reticulum lumen. This is an uncharacterized protein from Schizosaccharomyces pombe (strain 972 / ATCC 24843) (Fission yeast).